Here is a 590-residue protein sequence, read N- to C-terminus: Aspartate--tRNA(Asp/Asn) ligase (590 aa).

Glu175 is a binding site for L-aspartate. Positions 199-202 are aspartate; that stretch reads QQYK. 2 residues coordinate L-aspartate: Arg221 and His450. Residue 221 to 223 participates in ATP binding; sequence RDE. Glu484 lines the ATP pocket. Arg491 provides a ligand contact to L-aspartate. 536 to 539 contacts ATP; the sequence is GVDR.

The protein belongs to the class-II aminoacyl-tRNA synthetase family. Type 1 subfamily. In terms of assembly, homodimer.

The protein localises to the cytoplasm. It carries out the reaction tRNA(Asx) + L-aspartate + ATP = L-aspartyl-tRNA(Asx) + AMP + diphosphate. Aspartyl-tRNA synthetase with relaxed tRNA specificity since it is able to aspartylate not only its cognate tRNA(Asp) but also tRNA(Asn). Reaction proceeds in two steps: L-aspartate is first activated by ATP to form Asp-AMP and then transferred to the acceptor end of tRNA(Asp/Asn). In Nitrobacter hamburgensis (strain DSM 10229 / NCIMB 13809 / X14), this protein is Aspartate--tRNA(Asp/Asn) ligase.